The sequence spans 466 residues: Membrane-bound lytic murein transglycosylase F (466 aa).

The signal sequence occupies residues 1–24 (MKRFKLNYFIIGLIAILLTWSLWT). Residues 25–268 (TVPWRNAHQD…RLEEKYLGHV (244 aa)) are non-LT domain. Residues 269–466 (GGFDYVDTKT…KEKKAAQLAD (198 aa)) are LT domain. E313 is a catalytic residue.

This sequence in the N-terminal section; belongs to the bacterial solute-binding protein 3 family. It in the C-terminal section; belongs to the transglycosylase Slt family.

It localises to the cell outer membrane. It catalyses the reaction Exolytic cleavage of the (1-&gt;4)-beta-glycosidic linkage between N-acetylmuramic acid (MurNAc) and N-acetylglucosamine (GlcNAc) residues in peptidoglycan, from either the reducing or the non-reducing ends of the peptidoglycan chains, with concomitant formation of a 1,6-anhydrobond in the MurNAc residue.. Functionally, murein-degrading enzyme that degrades murein glycan strands and insoluble, high-molecular weight murein sacculi, with the concomitant formation of a 1,6-anhydromuramoyl product. Lytic transglycosylases (LTs) play an integral role in the metabolism of the peptidoglycan (PG) sacculus. Their lytic action creates space within the PG sacculus to allow for its expansion as well as for the insertion of various structures such as secretion systems and flagella. The polypeptide is Membrane-bound lytic murein transglycosylase F (Sodalis glossinidius (strain morsitans)).